Reading from the N-terminus, the 483-residue chain is tRNA sulfurtransferase (483 aa).

A THUMP domain is found at 61 to 165; the sequence is AEVLEILTTT…DELLNQVIAR (105 aa). ATP-binding positions include 183–184, K265, G287, and Q296; that span reads LI. C344 and C457 are joined by a disulfide. Residues 405 to 483 form the Rhodanese domain; it reads EEGNAVVLDI…GFNNVKVYRP (79 aa). C457 functions as the Cysteine persulfide intermediate in the catalytic mechanism.

This sequence belongs to the ThiI family.

It is found in the cytoplasm. It carries out the reaction [ThiI sulfur-carrier protein]-S-sulfanyl-L-cysteine + a uridine in tRNA + 2 reduced [2Fe-2S]-[ferredoxin] + ATP + H(+) = [ThiI sulfur-carrier protein]-L-cysteine + a 4-thiouridine in tRNA + 2 oxidized [2Fe-2S]-[ferredoxin] + AMP + diphosphate. The catalysed reaction is [ThiS sulfur-carrier protein]-C-terminal Gly-Gly-AMP + S-sulfanyl-L-cysteinyl-[cysteine desulfurase] + AH2 = [ThiS sulfur-carrier protein]-C-terminal-Gly-aminoethanethioate + L-cysteinyl-[cysteine desulfurase] + A + AMP + 2 H(+). It participates in cofactor biosynthesis; thiamine diphosphate biosynthesis. Functionally, catalyzes the ATP-dependent transfer of a sulfur to tRNA to produce 4-thiouridine in position 8 of tRNAs, which functions as a near-UV photosensor. Also catalyzes the transfer of sulfur to the sulfur carrier protein ThiS, forming ThiS-thiocarboxylate. This is a step in the synthesis of thiazole, in the thiamine biosynthesis pathway. The sulfur is donated as persulfide by IscS. The chain is tRNA sulfurtransferase from Vibrio cholerae serotype O1 (strain ATCC 39315 / El Tor Inaba N16961).